Consider the following 123-residue polypeptide: WAP four-disulfide core domain protein 5 (123 aa).

The first 24 residues, 1-24, serve as a signal peptide directing secretion; that stretch reads MRIQSLLLLGALLAVGSQLPAVFG. WAP domains lie at 27 to 73 and 74 to 121; these read KGEK…CVPR and VSVK…RDPA. 8 disulfides stabilise this stretch: Cys34–Cys62, Cys41–Cys66, Cys49–Cys61, Cys55–Cys70, Cys81–Cys109, Cys88–Cys113, Cys96–Cys108, and Cys102–Cys117.

The protein localises to the secreted. In terms of biological role, putative acid-stable proteinase inhibitor. The protein is WAP four-disulfide core domain protein 5 (WFDC5) of Chlorocebus aethiops (Green monkey).